We begin with the raw amino-acid sequence, 228 residues long: 7-cyano-7-deazaguanine synthase (228 aa).

An ATP-binding site is contributed by 7–17 (LSGGLDSAVNL). Cys192, Cys200, Cys203, and Cys206 together coordinate Zn(2+).

The protein belongs to the QueC family. Homodimer. Zn(2+) is required as a cofactor.

It catalyses the reaction 7-carboxy-7-deazaguanine + NH4(+) + ATP = 7-cyano-7-deazaguanine + ADP + phosphate + H2O + H(+). It functions in the pathway purine metabolism; 7-cyano-7-deazaguanine biosynthesis. Catalyzes the ATP-dependent conversion of 7-carboxy-7-deazaguanine (CDG) to 7-cyano-7-deazaguanine (preQ(0)). The polypeptide is 7-cyano-7-deazaguanine synthase (Desulforamulus reducens (strain ATCC BAA-1160 / DSM 100696 / MI-1) (Desulfotomaculum reducens)).